Reading from the N-terminus, the 322-residue chain is Transaldolase (322 aa).

Lys-136 serves as the catalytic Schiff-base intermediate with substrate.

It belongs to the transaldolase family. Type 1 subfamily. As to quaternary structure, homodimer.

It localises to the cytoplasm. It carries out the reaction D-sedoheptulose 7-phosphate + D-glyceraldehyde 3-phosphate = D-erythrose 4-phosphate + beta-D-fructose 6-phosphate. It participates in carbohydrate degradation; pentose phosphate pathway; D-glyceraldehyde 3-phosphate and beta-D-fructose 6-phosphate from D-ribose 5-phosphate and D-xylulose 5-phosphate (non-oxidative stage): step 2/3. In terms of biological role, transaldolase is important for the balance of metabolites in the pentose-phosphate pathway. This is Transaldolase from Xanthomonas oryzae pv. oryzae (strain KACC10331 / KXO85).